The sequence spans 363 residues: Flagellar P-ring protein (363 aa).

The N-terminal stretch at 1–20 is a signal peptide; it reads MKLKLFLLSVLLLVSGSSQA.

The protein belongs to the FlgI family. In terms of assembly, the basal body constitutes a major portion of the flagellar organelle and consists of four rings (L,P,S, and M) mounted on a central rod.

The protein resides in the periplasm. Its subcellular location is the bacterial flagellum basal body. Its function is as follows. Assembles around the rod to form the L-ring and probably protects the motor/basal body from shearing forces during rotation. The sequence is that of Flagellar P-ring protein from Shewanella woodyi (strain ATCC 51908 / MS32).